A 382-amino-acid chain; its full sequence is Mannitol-1-phosphate 5-dehydrogenase (382 aa).

4–15 contributes to the NAD(+) binding site; it reads AVHFGAGNIGRG.

Belongs to the mannitol dehydrogenase family.

It carries out the reaction D-mannitol 1-phosphate + NAD(+) = beta-D-fructose 6-phosphate + NADH + H(+). This Vibrio campbellii (strain ATCC BAA-1116) protein is Mannitol-1-phosphate 5-dehydrogenase.